A 667-amino-acid chain; its full sequence is MSEAISLTFPDGSVRSYPAGTTGREVAESISKSLAKKAVAIALDGTVRDLSETITDGKIEIVTREDGRALELIRHDAAHVMAEAVQELWPGTQVTIGPVIENGFYYDFAKNEPFTPEDLPKIEKRMKEIIQRNKPFTREIWSREKAKEVFAAKGENYKVELVDAIPEGQDLKIYYQGDWFDLCRGPHMASTGQIGTAFKLMKVAGAYWRGDSNNAMLSRIYGTAWATQEELDNYLHVLAEAEKRDHRRLGREMDLFHFQEEGPGVVFWHGKGWRMFQTLTAYMRRRLANTYQEVNAPQVLDKSLWETSGHWGWYQENMFAVKSAHAFTHPDDKEADQRVFALKPMNCPGHVQIFKHGLKSYREMPVRLAEFGNVHRYEASGALHGLMRVRGFTQDDAHVFCTEEQMAAECLRINDLILSVYEDFGFSEIVVKLSTRPEKRVGSDDLWDRAESVMLEVLKTIEEQSGGRIKTGILPGEGAFYGPKFEYTLKDAIGREWQCGTTQVDFNLPERFGAFYIDQNSEKTQPVMIHRAICGSMERFLGILIENFAGHMPLWFAPLQVVVATITSDADDYGREVAEALREAGMAVETDFRNEKINYKVREHSVTKVPVIIVCGRKEAEERTVNIRRLGSQNQTSMSLEEAITSLVDEATPPDVKRKLAAKKQLA.

One can recognise a TGS domain in the interval 1 to 64 (MSEAISLTFP…TDGKIEIVTR (64 aa)). The catalytic stretch occupies residues 245-553 (DHRRLGREMD…LIENFAGHMP (309 aa)). Zn(2+)-binding residues include C347, H398, and H530.

The protein belongs to the class-II aminoacyl-tRNA synthetase family. In terms of assembly, homodimer. Requires Zn(2+) as cofactor.

The protein resides in the cytoplasm. The enzyme catalyses tRNA(Thr) + L-threonine + ATP = L-threonyl-tRNA(Thr) + AMP + diphosphate + H(+). In terms of biological role, catalyzes the attachment of threonine to tRNA(Thr) in a two-step reaction: L-threonine is first activated by ATP to form Thr-AMP and then transferred to the acceptor end of tRNA(Thr). Also edits incorrectly charged L-seryl-tRNA(Thr). The polypeptide is Threonine--tRNA ligase (Agrobacterium fabrum (strain C58 / ATCC 33970) (Agrobacterium tumefaciens (strain C58))).